The primary structure comprises 885 residues: Leucine--tRNA ligase (885 aa).

The 'HIGH' region signature appears at proline 48 to histidine 58. The short motif at threonine 639–serine 643 is the 'KMSKS' region element. ATP is bound at residue lysine 642.

The protein belongs to the class-I aminoacyl-tRNA synthetase family.

It localises to the cytoplasm. It carries out the reaction tRNA(Leu) + L-leucine + ATP = L-leucyl-tRNA(Leu) + AMP + diphosphate. The sequence is that of Leucine--tRNA ligase from Bordetella avium (strain 197N).